Here is a 288-residue protein sequence, read N- to C-terminus: Cyclic UMP-AMP synthase (288 aa).

The tract at residues 1–23 (MPVPESQLERWSHQGATTTAKKT) is disordered. Gln-46 is a binding site for UTP. 46–48 (QGS) contacts ATP. Asp-60 and Asp-62 together coordinate Mg(2+). Residues Asp-62 and 116-120 (RKTLK) contribute to the UTP site. Asp-129 serves as a coordination point for Mg(2+). Asn-166 is a UTP binding site. ATP contacts are provided by Lys-194, Ser-212, and Glu-265.

The protein belongs to the CD-NTase family. E01 subfamily. Requires Mg(2+) as cofactor.

The catalysed reaction is UTP + ATP = 3',3'-cUAMP + 2 diphosphate. In terms of biological role, cyclic nucleotide synthase (second messenger synthase) of a CBASS antivirus system. CBASS (cyclic oligonucleotide-based antiphage signaling system) provides immunity against bacteriophage. The CD-NTase protein synthesizes cyclic nucleotides in response to infection; these serve as specific second messenger signals. The signals activate a diverse range of effectors, leading to bacterial cell death and thus abortive phage infection. A type I-B(UU) CBASS system. Its function is as follows. Cyclic dinucleotide synthase that catalyzes the synthesis of 3'3'-cyclic UMP-AMP (cUMP-AMP) from UTP and ATP, a second messenger for cell signal transduction. The sequence is that of Cyclic UMP-AMP synthase from Rhodothermus marinus (strain SG0.5JP17-172).